Here is a 390-residue protein sequence, read N- to C-terminus: Lipid-A-disaccharide synthase (390 aa).

Belongs to the LpxB family.

It carries out the reaction a lipid X + a UDP-2-N,3-O-bis[(3R)-3-hydroxyacyl]-alpha-D-glucosamine = a lipid A disaccharide + UDP + H(+). Its pathway is bacterial outer membrane biogenesis; LPS lipid A biosynthesis. Functionally, condensation of UDP-2,3-diacylglucosamine and 2,3-diacylglucosamine-1-phosphate to form lipid A disaccharide, a precursor of lipid A, a phosphorylated glycolipid that anchors the lipopolysaccharide to the outer membrane of the cell. This Neisseria gonorrhoeae (strain ATCC 700825 / FA 1090) protein is Lipid-A-disaccharide synthase.